The sequence spans 21 residues: Maculatin-1.1 (21 aa).

Phenylalanine amide is present on Phe21.

Expressed by the skin dorsal glands.

The protein resides in the secreted. Maculatin-1.1 shows significant antibacterial activity against Gram-positive bacteria, less against Gram-negative bacteria. Maculatin-1.1.1 is inactive. The sequence is that of Maculatin-1.1 from Ranoidea genimaculata (Brown-spotted tree frog).